Here is a 393-residue protein sequence, read N- to C-terminus: Probable chromate transport protein (393 aa).

A run of 10 helical transmembrane segments spans residues 22–42, 90–110, 119–139, 146–166, 201–221, 231–251, 261–281, 282–302, 327–347, and 370–390; these read YFLK…GYMH, ALVG…LGWA, WMQA…AISA, TVGT…TTIV, FIGL…TSLL, AGAF…GGVV, QFLD…ITTG, FIGF…AMFI, FVNG…VVLG, and LGKK…GVIF.

It belongs to the chromate ion transporter (CHR) (TC 2.A.51) family.

The protein resides in the cell membrane. Functionally, may function in the active transport of chromate into the cell under sulfur-deficient conditions. The polypeptide is Probable chromate transport protein (srpC) (Synechococcus elongatus (strain ATCC 33912 / PCC 7942 / FACHB-805) (Anacystis nidulans R2)).